Reading from the N-terminus, the 46-residue chain is MRLAMPSGNQEPRRDPELKRKAWLAVFLGSALFWVVVALLIWKVWG.

Residues 22-42 traverse the membrane as a helical segment; the sequence is AWLAVFLGSALFWVVVALLIW.

The protein resides in the cell inner membrane. This is Protein YmiA (ymiA) from Escherichia coli (strain K12).